Consider the following 313-residue polypeptide: Beta-ketoacyl-[acyl-carrier-protein] synthase III (313 aa).

Catalysis depends on residues Cys-112 and His-238. The tract at residues 239–243 (QANIR) is ACP-binding. Asn-268 is an active-site residue.

It belongs to the thiolase-like superfamily. FabH family. Homodimer.

Its subcellular location is the cytoplasm. It catalyses the reaction malonyl-[ACP] + acetyl-CoA + H(+) = 3-oxobutanoyl-[ACP] + CO2 + CoA. It functions in the pathway lipid metabolism; fatty acid biosynthesis. In terms of biological role, catalyzes the condensation reaction of fatty acid synthesis by the addition to an acyl acceptor of two carbons from malonyl-ACP. Catalyzes the first condensation reaction which initiates fatty acid synthesis and may therefore play a role in governing the total rate of fatty acid production. Possesses both acetoacetyl-ACP synthase and acetyl transacylase activities. Its substrate specificity determines the biosynthesis of branched-chain and/or straight-chain of fatty acids. In Staphylococcus haemolyticus (strain JCSC1435), this protein is Beta-ketoacyl-[acyl-carrier-protein] synthase III.